The chain runs to 409 residues: Shaggy-related protein kinase NtK-1 (409 aa).

A disordered region spans residues 1 to 27; it reads MTSVGLAPVSGLRESSSHSVGVDRLPE. The 285-residue stretch at 73–357 folds into the Protein kinase domain; sequence YMAERIVGQG…ALEAVTHAFF (285 aa). ATP-binding positions include 79–87 and Lys-102; that span reads VGQGSFGVV. Catalysis depends on Asp-198, which acts as the Proton acceptor.

This sequence belongs to the protein kinase superfamily. CMGC Ser/Thr protein kinase family. GSK-3 subfamily. Autophosphorylated mainly on threonine and serine residues.

It catalyses the reaction L-seryl-[protein] + ATP = O-phospho-L-seryl-[protein] + ADP + H(+). The catalysed reaction is L-threonyl-[protein] + ATP = O-phospho-L-threonyl-[protein] + ADP + H(+). May mediate extracellular signals to regulate transcription in differentiating cells. In Nicotiana tabacum (Common tobacco), this protein is Shaggy-related protein kinase NtK-1 (NTK-1).